We begin with the raw amino-acid sequence, 243 residues long: Probable transcriptional regulatory protein BRE_29 (243 aa).

This sequence belongs to the TACO1 family.

It localises to the cytoplasm. The protein is Probable transcriptional regulatory protein BRE_29 of Borrelia recurrentis (strain A1).